The following is a 121-amino-acid chain: MTGRVKKTNPRLTSLITTLKDASRTGEVKIWRDIANRLEASTSAHAEVNISKINRYAAEGETILVPGKVLGSGMLNQSVRVAALNFSESAVSKIAKAQGTCMTIEELLANNPKGSRVRILR.

The protein belongs to the eukaryotic ribosomal protein eL18 family.

This is Large ribosomal subunit protein eL18 from Methanosphaerula palustris (strain ATCC BAA-1556 / DSM 19958 / E1-9c).